A 918-amino-acid polypeptide reads, in one-letter code: Chitin synthase C (918 aa).

The tract at residues 1–63 (MSYNRLGDPY…EMPSSDRLAE (63 aa)) is disordered. The span at 22–37 (NPSSLSNRSPSPGRPL) shows a compositional bias: low complexity. A run of 4 helical transmembrane segments spans residues 562-581 (WLNGSFFAAVYAITHFYQLW), 605-625 (LFAWFGIGNFFLVFHILTTYL), 637-657 (VLGVVFEWLYLATLVTCFVLS), and 672-692 (MVYLWVFIMIYLAFAAVFVTV). Residue Asn-712 is glycosylated (N-linked (GlcNAc...) asparagine). 3 helical membrane-spanning segments follow: residues 715–735 (FFSIIVSLGSTYVMWFIASII), 845–865 (VVLVWVFCNFALGAVVLSSAG), and 890–910 (VVLWSVAGLSIFKFLGAMWFL).

The protein belongs to the chitin synthase family. Class I subfamily. As to expression, mainly expressed in hyphae and conidiphores. Relatively strongly expressed in young cleistothecia and in mature ascospores, but negligible in Huelle cells.

The protein localises to the cell membrane. The protein resides in the cell septum. Its subcellular location is the cell tip. The catalysed reaction is [(1-&gt;4)-N-acetyl-beta-D-glucosaminyl](n) + UDP-N-acetyl-alpha-D-glucosamine = [(1-&gt;4)-N-acetyl-beta-D-glucosaminyl](n+1) + UDP + H(+). Its function is as follows. Polymerizes chitin, a structural polymer of the cell wall and septum, by transferring the sugar moiety of UDP-GlcNAc to the non-reducing end of the growing chitin polymer. ChsC and chsA share critical functions in hyphal wall integrity and differentiation. ChsA and chsC share also overlapping roles in septum formation. The protein is Chitin synthase C of Emericella nidulans (strain FGSC A4 / ATCC 38163 / CBS 112.46 / NRRL 194 / M139) (Aspergillus nidulans).